Reading from the N-terminus, the 1183-residue chain is Putative ATP-dependent RNA helicase PB1A10.06c (1183 aa).

2 disordered regions span residues 1–92 and 165–315; these read MGRL…KKRL and ETTT…RASR. The span at 60-81 shows a compositional bias: basic and acidic residues; sequence VPKEERQKRKQELKDQLLKENE. Low complexity-rich tracts occupy residues 165-176 and 184-196; these read ETTTTKSSTAET and TRSG…STGT. Acidic residues predominate over residues 224 to 251; sequence EDPEYDSAEEDYLSTDSEEFSEDSDNSS. Positions 252–270 are enriched in basic and acidic residues; that stretch reads EENKDTNEPSTKDAEKTVP. Residues 292–308 are compositionally biased toward acidic residues; it reads ENEDFDLETSEDDSSDD. One can recognise a Helicase ATP-binding domain in the interval 408–585; the sequence is MEQIFANDVV…KLLFSVPPPI (178 aa). 421–428 is an ATP binding site; it reads GATGSGKT. A DEAH box motif is present at residues 522–525; that stretch reads DEAH. The Helicase C-terminal domain occupies 611–831; it reads AFDKVCLIHK…SIVLQMKNMN (221 aa). Residues 673–683 are compositionally biased toward acidic residues; sequence EDLQSETEDID. The disordered stretch occupies residues 673-696; the sequence is EDLQSETEDIDQVPTSSSSSVTYD.

It belongs to the DEAD box helicase family. DEAH subfamily.

The protein resides in the nucleus. It localises to the nucleolus. It carries out the reaction ATP + H2O = ADP + phosphate + H(+). The polypeptide is Putative ATP-dependent RNA helicase PB1A10.06c (Schizosaccharomyces pombe (strain 972 / ATCC 24843) (Fission yeast)).